A 323-amino-acid polypeptide reads, in one-letter code: Beta-ketoacyl-[acyl-carrier-protein] synthase III (323 aa).

Active-site residues include Cys112 and His250. An ACP-binding region spans residues 251-255 (QANQR). The active site involves Asn280.

This sequence belongs to the thiolase-like superfamily. FabH family. In terms of assembly, homodimer.

The protein resides in the cytoplasm. It catalyses the reaction malonyl-[ACP] + acetyl-CoA + H(+) = 3-oxobutanoyl-[ACP] + CO2 + CoA. It functions in the pathway lipid metabolism; fatty acid biosynthesis. Catalyzes the condensation reaction of fatty acid synthesis by the addition to an acyl acceptor of two carbons from malonyl-ACP. Catalyzes the first condensation reaction which initiates fatty acid synthesis and may therefore play a role in governing the total rate of fatty acid production. Possesses both acetoacetyl-ACP synthase and acetyl transacylase activities. Its substrate specificity determines the biosynthesis of branched-chain and/or straight-chain of fatty acids. The protein is Beta-ketoacyl-[acyl-carrier-protein] synthase III of Oenococcus oeni (strain ATCC BAA-331 / PSU-1).